Here is a 341-residue protein sequence, read N- to C-terminus: ATPase GET3 (341 aa).

An ATP-binding site is contributed by 34 to 41 (KGGVGKTT). Residue Asp63 is part of the active site. Residues Glu245 and Asn272 each contribute to the ATP site. Positions 283 and 286 each coordinate Zn(2+).

The protein belongs to the arsA ATPase family. In terms of assembly, homodimer.

The protein resides in the cytoplasm. It is found in the endoplasmic reticulum. Functionally, ATPase required for the post-translational delivery of tail-anchored (TA) proteins to the endoplasmic reticulum. Recognizes and selectively binds the transmembrane domain of TA proteins in the cytosol. This complex then targets to the endoplasmic reticulum by membrane-bound receptors, where the tail-anchored protein is released for insertion. This process is regulated by ATP binding and hydrolysis. ATP binding drives the homodimer towards the closed dimer state, facilitating recognition of newly synthesized TA membrane proteins. ATP hydrolysis is required for insertion. Subsequently, the homodimer reverts towards the open dimer state, lowering its affinity for the membrane-bound receptor, and returning it to the cytosol to initiate a new round of targeting. The sequence is that of ATPase GET3 from Ajellomyces capsulatus (strain G186AR / H82 / ATCC MYA-2454 / RMSCC 2432) (Darling's disease fungus).